We begin with the raw amino-acid sequence, 155 residues long: S-ribosylhomocysteine lyase (155 aa).

3 residues coordinate Fe cation: H57, H61, and C124.

This sequence belongs to the LuxS family. In terms of assembly, homodimer. Requires Fe cation as cofactor.

It carries out the reaction S-(5-deoxy-D-ribos-5-yl)-L-homocysteine = (S)-4,5-dihydroxypentane-2,3-dione + L-homocysteine. In terms of biological role, involved in the synthesis of autoinducer 2 (AI-2) which is secreted by bacteria and is used to communicate both the cell density and the metabolic potential of the environment. The regulation of gene expression in response to changes in cell density is called quorum sensing. Catalyzes the transformation of S-ribosylhomocysteine (RHC) to homocysteine (HC) and 4,5-dihydroxy-2,3-pentadione (DPD). In Listeria monocytogenes serovar 1/2a (strain ATCC BAA-679 / EGD-e), this protein is S-ribosylhomocysteine lyase.